Here is a 479-residue protein sequence, read N- to C-terminus: Transcription factor CP2-like protein 1 (479 aa).

In terms of domain architecture, Grh/CP2 DB spans 43–280; the sequence is RLPPLQYVLC…PSPSYNGSPN (238 aa). Disordered stretches follow at residues 219–245 and 271–301; these read KPKGADRKQKTDREKMEKRTAQEKEKY and PSPSYNGSPNSFGLGEGNASPTHPVEALPVG. Over residues 221 to 245 the composition is skewed to basic and acidic residues; the sequence is KGADRKQKTDREKMEKRTAQEKEKY. An SAM2-like domain region spans residues 261 to 365; the sequence is PDVAYQVNSA…IRLFNAIKGR (105 aa). The segment covering 271 to 281 has biased composition (polar residues); the sequence is PSPSYNGSPNS.

This sequence belongs to the grh/CP2 family. CP2 subfamily. In terms of assembly, forms homohexamers via its SAM-like domain. Interacts with MTA1; which is indispensable for TFCP2l1-mediated self-renewal-promoting effect and endoderm-inhibiting action. Highly expressed in placental JEG-3 cells and very low levels of expression in non-steroidogenic cells. No expression was seen in adrenal NCI-H295A cells or in adrenal tissue.

The protein localises to the nucleus. Functionally, transcription factor that facilitates establishment and maintenance of pluripotency in embryonic stem cells (ESCs). With KLF2, acts as the major effector of self-renewal that mediates induction of pluripotency downstream of LIF/STAT3 and Wnt/beta-catenin signaling. Required for normal duct development in the salivary gland and kidney. Coordinates the development of the kidney collecting ducts intercalated (IC) and principal (PC) cells, which regulate acid-base and salt-water homeostasis, respectively. Regulates the expression of IC genes including subunits B1 and D2 of the V-ATPase complex, OXGR1, CA12, SLC4A1, AQP6 and IC-specific transcription factor FOXI1. Also regulates the expression of JAG1 and subsequent notch signaling in the collecting duct. JAG1 initiates notch signaling in PCs but inhibits notch signaling in ICs. Acts as a transcriptional suppressor that may suppress UBP1-mediated transcriptional activation. Modulates the placental expression of CYP11A1. This Homo sapiens (Human) protein is Transcription factor CP2-like protein 1 (TFCP2L1).